The chain runs to 314 residues: 2,3-dihydroxyphenylpropionate/2,3-dihydroxicinnamic acid 1,2-dioxygenase (314 aa).

Histidine 115 serves as the catalytic Proton donor. Catalysis depends on histidine 179, which acts as the Proton acceptor.

The protein belongs to the LigB/MhpB extradiol dioxygenase family. As to quaternary structure, homotetramer. The cofactor is Fe(2+).

The enzyme catalyses 3-(2,3-dihydroxyphenyl)propanoate + O2 = (2Z,4E)-2-hydroxy-6-oxonona-2,4-dienedioate + H(+). It catalyses the reaction (2E)-3-(2,3-dihydroxyphenyl)prop-2-enoate + O2 = (2Z,4E,7E)-2-hydroxy-6-oxonona-2,4,7-trienedioate + H(+). It functions in the pathway aromatic compound metabolism; 3-phenylpropanoate degradation. In terms of biological role, catalyzes the non-heme iron(II)-dependent oxidative cleavage of 2,3-dihydroxyphenylpropionic acid and 2,3-dihydroxicinnamic acid into 2-hydroxy-6-ketononadienedioate and 2-hydroxy-6-ketononatrienedioate, respectively. The polypeptide is 2,3-dihydroxyphenylpropionate/2,3-dihydroxicinnamic acid 1,2-dioxygenase (Escherichia coli O81 (strain ED1a)).